We begin with the raw amino-acid sequence, 202 residues long: Probable GTP-binding protein EngB (202 aa).

The EngB-type G domain maps to 30 to 201 (NILQIALAGR…WERIQYTIDS (172 aa)). GTP-binding positions include 38 to 45 (GRSNVGKS), 65 to 69 (GKTRS), 84 to 87 (DLPG), 151 to 154 (TKID), and 180 to 182 (VSS). Mg(2+)-binding residues include S45 and T67.

This sequence belongs to the TRAFAC class TrmE-Era-EngA-EngB-Septin-like GTPase superfamily. EngB GTPase family. The cofactor is Mg(2+).

Necessary for normal cell division and for the maintenance of normal septation. In Lawsonia intracellularis (strain PHE/MN1-00), this protein is Probable GTP-binding protein EngB.